The sequence spans 197 residues: 7-methyl-GTP pyrophosphatase (197 aa).

The active-site Proton acceptor is Asp72.

This sequence belongs to the Maf family. YceF subfamily. The cofactor is a divalent metal cation.

It localises to the cytoplasm. The catalysed reaction is N(7)-methyl-GTP + H2O = N(7)-methyl-GMP + diphosphate + H(+). In terms of biological role, nucleoside triphosphate pyrophosphatase that hydrolyzes 7-methyl-GTP (m(7)GTP). May have a dual role in cell division arrest and in preventing the incorporation of modified nucleotides into cellular nucleic acids. The polypeptide is 7-methyl-GTP pyrophosphatase (Bordetella avium (strain 197N)).